We begin with the raw amino-acid sequence, 349 residues long: Hydroxymethylglutaryl-CoA synthase (349 aa).

Residues Asp30 and Ala31 each contribute to the (3S)-3-hydroxy-3-methylglutaryl-CoA site. The active-site Proton donor/acceptor is the Glu82. Residues Cys114 and Thr155 each coordinate (3S)-3-hydroxy-3-methylglutaryl-CoA. Cys114 acts as the Acyl-thioester intermediate in catalysis. CoA is bound at residue Arg203. (3S)-3-hydroxy-3-methylglutaryl-CoA-binding residues include Thr205 and His238. The active-site Proton donor/acceptor is His238. Lys243 serves as a coordination point for CoA. (3S)-3-hydroxy-3-methylglutaryl-CoA contacts are provided by Asn270 and Ser300.

The protein belongs to the thiolase-like superfamily. Archaeal HMG-CoA synthase family. In terms of assembly, interacts with acetoacetyl-CoA thiolase that catalyzes the precedent step in the pathway and with a DUF35 protein. The acetoacetyl-CoA thiolase/HMG-CoA synthase complex channels the intermediate via a fused CoA-binding site, which allows for efficient coupling of the endergonic thiolase reaction with the exergonic HMGCS reaction.

It catalyses the reaction acetoacetyl-CoA + acetyl-CoA + H2O = (3S)-3-hydroxy-3-methylglutaryl-CoA + CoA + H(+). It functions in the pathway metabolic intermediate biosynthesis; (R)-mevalonate biosynthesis; (R)-mevalonate from acetyl-CoA: step 2/3. Its function is as follows. Catalyzes the condensation of acetyl-CoA with acetoacetyl-CoA to form 3-hydroxy-3-methylglutaryl-CoA (HMG-CoA). Functions in the mevalonate (MVA) pathway leading to isopentenyl diphosphate (IPP), a key precursor for the biosynthesis of isoprenoid compounds that are building blocks of archaeal membrane lipids. The polypeptide is Hydroxymethylglutaryl-CoA synthase (Methanococcus maripaludis (strain C6 / ATCC BAA-1332)).